A 628-amino-acid chain; its full sequence is Zinc finger protein 555 (628 aa).

The region spanning 4-77 (VVFEDVAVDF…ESKIATFTRN (74 aa)) is the KRAB domain. Residues 172 to 194 (YQCQECGQAYSCRSHLRMHVRTH) form a C2H2-type 1; degenerate zinc finger. C2H2-type zinc fingers lie at residues 200–222 (YVCK…VRIH), 228–250 (YECK…LRSH), 256–278 (YKCK…TITH), 284–306 (YKCK…MISH), 312–334 (HKCK…MITH), 340–362 (YECK…ERIH), 368–390 (YECK…ERTH), 396–418 (YECN…MRVH), 424–446 (YECK…MRTH), 452–474 (YECK…VRMH), 480–502 (YECK…MRRH), 508–530 (YKCK…VRTH), 536–558 (YECK…MRLH), and 564–586 (YQCK…VRIH).

The protein belongs to the krueppel C2H2-type zinc-finger protein family.

It localises to the nucleus. Functionally, may be involved in transcriptional regulation. This is Zinc finger protein 555 (ZNF555) from Homo sapiens (Human).